The primary structure comprises 270 residues: Homeobox protein Hox-D12 (270 aa).

The tract at residues 102-122 (APEAAAGPEERGRTRPSFAPE) is disordered. The homeobox DNA-binding region spans 202 to 261 (ARKKRKPYTKQQIAELENEFLVNEFINRQKRKELSNRLNLSDQQVKIWFQNRRMKKKRVV).

The protein belongs to the Abd-B homeobox family.

Its subcellular location is the nucleus. Functionally, sequence-specific transcription factor which is part of a developmental regulatory system that provides cells with specific positional identities on the anterior-posterior axis. This Homo sapiens (Human) protein is Homeobox protein Hox-D12 (HOXD12).